A 426-amino-acid chain; its full sequence is Gamma-glutamyl phosphate reductase (426 aa).

Belongs to the gamma-glutamyl phosphate reductase family.

Its subcellular location is the cytoplasm. It carries out the reaction L-glutamate 5-semialdehyde + phosphate + NADP(+) = L-glutamyl 5-phosphate + NADPH + H(+). It participates in amino-acid biosynthesis; L-proline biosynthesis; L-glutamate 5-semialdehyde from L-glutamate: step 2/2. Functionally, catalyzes the NADPH-dependent reduction of L-glutamate 5-phosphate into L-glutamate 5-semialdehyde and phosphate. The product spontaneously undergoes cyclization to form 1-pyrroline-5-carboxylate. The sequence is that of Gamma-glutamyl phosphate reductase from Nitrobacter winogradskyi (strain ATCC 25391 / DSM 10237 / CIP 104748 / NCIMB 11846 / Nb-255).